The following is a 517-amino-acid chain: Bifunctional purine biosynthesis protein PurH (517 aa).

In terms of domain architecture, MGS-like spans 1-145 (MSPLALVSVS…KNHKDVSVLV (145 aa)).

Belongs to the PurH family.

It catalyses the reaction (6R)-10-formyltetrahydrofolate + 5-amino-1-(5-phospho-beta-D-ribosyl)imidazole-4-carboxamide = 5-formamido-1-(5-phospho-D-ribosyl)imidazole-4-carboxamide + (6S)-5,6,7,8-tetrahydrofolate. The catalysed reaction is IMP + H2O = 5-formamido-1-(5-phospho-D-ribosyl)imidazole-4-carboxamide. The protein operates within purine metabolism; IMP biosynthesis via de novo pathway; 5-formamido-1-(5-phospho-D-ribosyl)imidazole-4-carboxamide from 5-amino-1-(5-phospho-D-ribosyl)imidazole-4-carboxamide (10-formyl THF route): step 1/1. Its pathway is purine metabolism; IMP biosynthesis via de novo pathway; IMP from 5-formamido-1-(5-phospho-D-ribosyl)imidazole-4-carboxamide: step 1/1. The protein is Bifunctional purine biosynthesis protein PurH of Prochlorococcus marinus subsp. pastoris (strain CCMP1986 / NIES-2087 / MED4).